Consider the following 586-residue polypeptide: MSAAAVDAANAAPLSGSKEMSLEEPKKMTREDWRKKKELEEQRKLGNAPAEVDEEGKDINPHIPQYISSVPWYIDPSKRPTLKHQRPQPEKQKQYSSSGEWYKRGVKENSITTKYRKGACENCGAMTHKKKDCFERPRRVGAKFTGTNIAPDEHVQPQLMFDYDGKRDRWNGYNPEEHMKIVEEYAKVDLAKRTLKAQKLQEELASGKLVEQANSPKHQWGEEEPNSQTEKDHNSEDEDEDKYADDIDMPGQNFDSKRRITVRNLRIREDIAKYLRNLDPNSAYYDPKTRAMRENPYANAGKNPDEVSYAGDNFVRYTGDTISMAQTQLFAWEAYDKGSEVHLQADPTKLELLYKSFKVKKEDFKEQQKESILEKYGGQEHLDAPPAELLLAQTEDYVEYSRHGTVIKGQERAVACSKYEEDVKINNHTHIWGSYWKEGRWGYKCCHSFFKYSYCTGEAGKEIANSEECIINDATGEESVKKPQTLMEIHQEKLKEEKKKKKKKKRKHRKSSSESDDEEKKHEKLKKALNAEEARLLHVKEIMQIDERKRPYNSIYETREPTEEEMEAYRMKRQRPDDPMASFLGQ.

Positions 1-12 are enriched in low complexity; the sequence is MSAAAVDAANAA. Residues 1–103 form a disordered region; the sequence is MSAAAVDAAN…QYSSSGEWYK (103 aa). N-acetylserine is present on Ser-2. Residues 20 to 44 are compositionally biased toward basic and acidic residues; that stretch reads MSLEEPKKMTREDWRKKKELEEQRK. The CCHC-type zinc finger occupies 118–135; sequence GACENCGAMTHKKKDCFE. The Bipartite nuclear localization signal signature appears at 129–169; it reads KKKDCFERPRRVGAKFTGTNIAPDEHVQPQLMFDYDGKRDR. A disordered region spans residues 206–254; that stretch reads SGKLVEQANSPKHQWGEEEPNSQTEKDHNSEDEDEDKYADDIDMPGQNF. A phosphoserine mark is found at Ser-215, Ser-227, and Ser-235. Acidic residues predominate over residues 235–248; the sequence is SEDEDEDKYADDID. Glycyl lysine isopeptide (Lys-Gly) (interchain with G-Cter in SUMO2) cross-links involve residues Lys-349 and Lys-408. Positions 491-586 are disordered; sequence QEKLKEEKKK…DDPMASFLGQ (96 aa). Over residues 498-510 the composition is skewed to basic residues; that stretch reads KKKKKKKKRKHRK. 2 stretches are compositionally biased toward basic and acidic residues: residues 529–550 and 557–578; these read LNAE…ERKR and ETRE…RPDD.

The protein belongs to the SLU7 family. In terms of assembly, component of pre-catalytic, catalytic and post-catalytic spliceosomes. Associates with the spliceosome prior to recognition of the 3'-splice site for step II, probably during catalysis of step I.

The protein resides in the nucleus. The protein localises to the nucleus speckle. It is found in the cytoplasm. Required for pre-mRNA splicing as component of the spliceosome. Participates in the second catalytic step of pre-mRNA splicing, when the free hydroxyl group of exon I attacks the 3'-splice site to generate spliced mRNA and the excised lariat intron. Required for holding exon 1 properly in the spliceosome and for correct AG identification when more than one possible AG exists in 3'-splicing site region. May be involved in the activation of proximal AG. Probably also involved in alternative splicing regulation. This Bos taurus (Bovine) protein is Pre-mRNA-splicing factor SLU7 (SLU7).